The sequence spans 369 residues: 4beta-methylsterol monooxygenase (369 aa).

The Rieske domain maps to 29–135 (WYVVEIDGRL…VKAQWGLIWL (107 aa)). Residues Cys70, His72, Cys89, and His92 each coordinate [2Fe-2S] cluster.

[2Fe-2S] cluster is required as a cofactor.

It catalyses the reaction a 3beta-hydroxy-4,4-dimethylsteroid + 3 NADH + 3 O2 + 2 H(+) = a 3beta-hydroxy-4alpha-methylsteroid-4beta-carboxylate + 3 NAD(+) + 4 H2O. It carries out the reaction 4,4-dimethyl-5alpha-cholesta-8,24-dien-3beta-ol + 3 NADH + 3 O2 + 2 H(+) = 4beta-carboxy-4alpha-methyl-5alpha-cholesta-8,24-dien-3beta-ol + 3 NAD(+) + 4 H2O. The catalysed reaction is a 3beta-hydroxy-4,4-dimethylsteroid + NADH + O2 + H(+) = a 3beta-hydroxy-4beta-hydroxymethyl-4alpha-methylsteroid + NAD(+) + H2O. The enzyme catalyses a 3beta-hydroxy-4beta-hydroxymethyl-4alpha-methylsteroid + NADH + O2 + H(+) = a 3beta-hydroxy-4beta-formyl-4alpha-methylsteroid + NAD(+) + 2 H2O. It catalyses the reaction a 3beta-hydroxy-4beta-formyl-4alpha-methylsteroid + NADH + O2 = a 3beta-hydroxy-4alpha-methylsteroid-4beta-carboxylate + NAD(+) + H2O. It carries out the reaction 4,4-dimethyl-5alpha-cholesta-8,24-dien-3beta-ol + NADH + O2 + H(+) = 4beta-hydroxymethyl-4alpha-methylzymosterol + NAD(+) + H2O. The catalysed reaction is 4beta-hydroxymethyl-4alpha-methylzymosterol + NADH + O2 + H(+) = 4beta-formylmethyl-4alpha-methyl-5alpha-cholesta-8,24-dien-3beta-ol + NAD(+) + 2 H2O. The enzyme catalyses 4beta-formylmethyl-4alpha-methyl-5alpha-cholesta-8,24-dien-3beta-ol + NADH + O2 = 4beta-carboxy-4alpha-methyl-5alpha-cholesta-8,24-dien-3beta-ol + NAD(+) + H2O. Its pathway is steroid biosynthesis; sterol biosynthesis. Its function is as follows. Participates in the biosynthesis of bacterial sterols. Together with SdmB, removes one methyl group from the C-4 position of 4,4-dimethylated steroid molecules. SdmA oxidizes the sterol 4beta-methyl group into first a hydroxyl, then an aldehyde and finally a carboxylic acid group. The sequence is that of 4beta-methylsterol monooxygenase from Methylococcus capsulatus (strain ATCC 33009 / NCIMB 11132 / Bath).